The chain runs to 211 residues: FMN-dependent NADH:quinone oxidoreductase 2 (211 aa).

102–105 provides a ligand contact to FMN; sequence MWNF.

It belongs to the azoreductase type 1 family. As to quaternary structure, homodimer. The cofactor is FMN.

It catalyses the reaction 2 a quinone + NADH + H(+) = 2 a 1,4-benzosemiquinone + NAD(+). The catalysed reaction is N,N-dimethyl-1,4-phenylenediamine + anthranilate + 2 NAD(+) = 2-(4-dimethylaminophenyl)diazenylbenzoate + 2 NADH + 2 H(+). In terms of biological role, quinone reductase that provides resistance to thiol-specific stress caused by electrophilic quinones. Functionally, also exhibits azoreductase activity. Catalyzes the reductive cleavage of the azo bond in aromatic azo compounds to the corresponding amines. The protein is FMN-dependent NADH:quinone oxidoreductase 2 of Bacillus thuringiensis subsp. konkukian (strain 97-27).